The chain runs to 331 residues: Biotin synthase (331 aa).

In terms of domain architecture, Radical SAM core spans 52-277 (PEVEVEGIVS…RTILRYAGGR (226 aa)). Residues Cys67, Cys71, and Cys74 each contribute to the [4Fe-4S] cluster site. 3 residues coordinate [2Fe-2S] cluster: Cys110, Cys202, and Arg272.

It belongs to the radical SAM superfamily. Biotin synthase family. As to quaternary structure, homodimer. [4Fe-4S] cluster serves as cofactor. [2Fe-2S] cluster is required as a cofactor.

The enzyme catalyses (4R,5S)-dethiobiotin + (sulfur carrier)-SH + 2 reduced [2Fe-2S]-[ferredoxin] + 2 S-adenosyl-L-methionine = (sulfur carrier)-H + biotin + 2 5'-deoxyadenosine + 2 L-methionine + 2 oxidized [2Fe-2S]-[ferredoxin]. Its pathway is cofactor biosynthesis; biotin biosynthesis; biotin from 7,8-diaminononanoate: step 2/2. Functionally, catalyzes the conversion of dethiobiotin (DTB) to biotin by the insertion of a sulfur atom into dethiobiotin via a radical-based mechanism. The chain is Biotin synthase from Salinispora tropica (strain ATCC BAA-916 / DSM 44818 / JCM 13857 / NBRC 105044 / CNB-440).